Here is a 399-residue protein sequence, read N- to C-terminus: MKIKTLTVSDLTNYIKKVIDNDFILNNLSVKGEISNLKFHSSGHIYFSLKDNNSKVNCVMFKSKASLLNIALEDGMEVMVKGRASIYTATGSFQLYCDEIKKEGQGELFIKFEALKEKLSKSGYFDEKYKKNIPMYAKRIGIVTSSTGAVIRDIINVTKRRNSLVDIILYPAKVQGDNAYKEIIAGIEYFNKKKNIDIIIVGRGGGSIEELWNFNEEELAKVIFNSKLPIISAVGHEVDFTISDFVSDVRAATPSQAAEIAVPLLSDINTRIYEISKSLDYEIQKKLKDCKSRLESNERILKLHSPISKIVNSYLEIDKLKDRLYFAIDIKIKREKQKIESLNNLLSANNPIKVLNKGYAIIEDENNNIIKEISQLNEEKEISVSLSDGNIKGNFIPIK.

Belongs to the XseA family. In terms of assembly, heterooligomer composed of large and small subunits.

It is found in the cytoplasm. The catalysed reaction is Exonucleolytic cleavage in either 5'- to 3'- or 3'- to 5'-direction to yield nucleoside 5'-phosphates.. Functionally, bidirectionally degrades single-stranded DNA into large acid-insoluble oligonucleotides, which are then degraded further into small acid-soluble oligonucleotides. The chain is Exodeoxyribonuclease 7 large subunit from Clostridium botulinum (strain Eklund 17B / Type B).